Here is an 83-residue protein sequence, read N- to C-terminus: UPF0298 protein SERP0712 (83 aa).

This sequence belongs to the UPF0298 family.

It localises to the cytoplasm. The protein is UPF0298 protein SERP0712 of Staphylococcus epidermidis (strain ATCC 35984 / DSM 28319 / BCRC 17069 / CCUG 31568 / BM 3577 / RP62A).